We begin with the raw amino-acid sequence, 429 residues long: Ribosomal RNA small subunit methyltransferase B (429 aa).

S-adenosyl-L-methionine contacts are provided by residues 254 to 260 (CAAPGGK), aspartate 277, aspartate 303, and aspartate 322. The active-site Nucleophile is the cysteine 375.

The protein belongs to the class I-like SAM-binding methyltransferase superfamily. RsmB/NOP family.

It localises to the cytoplasm. The catalysed reaction is cytidine(967) in 16S rRNA + S-adenosyl-L-methionine = 5-methylcytidine(967) in 16S rRNA + S-adenosyl-L-homocysteine + H(+). Functionally, specifically methylates the cytosine at position 967 (m5C967) of 16S rRNA. This Shigella flexneri protein is Ribosomal RNA small subunit methyltransferase B.